Reading from the N-terminus, the 889-residue chain is Putative receptor-like protein kinase At3g46340 (889 aa).

The signal sequence occupies residues 1 to 25 (MEFPHSVLLVVLIIATFAISNLVQA). At 26–514 (EEDQEGFISL…VITKKKFPVM (489 aa)) the chain is on the extracellular side. Residues Asn-185, Asn-239, Asn-259, Asn-292, Asn-316, Asn-342, Asn-366, Asn-419, Asn-435, Asn-448, Asn-467, and Asn-474 are each glycosylated (N-linked (GlcNAc...) asparagine). LRR repeat units follow at residues 414-437 (RITS…QNLT), 438-460 (HLDK…LASM), and 462-483 (SLSF…ALLK). The helical transmembrane segment at 515-535 (IVALVSSAVVVILVVLVLIFV) threads the bilayer. Over 536–889 (FKKKKPSNLE…FDTKAVPSAR (354 aa)) the chain is Cytoplasmic. The tract at residues 544–566 (LEDLPPSSNTPRENITSTSISDT) is disordered. The Protein kinase domain maps to 585–874 (KNLQRPLGEG…TQGMDSHSSF (290 aa)). ATP contacts are provided by residues 591 to 599 (LGEGGFGVV) and Lys-614. Position 659 is a phosphotyrosine (Tyr-659). The active-site Proton acceptor is Asp-711. Phosphoserine is present on Ser-745. Phosphothreonine occurs at positions 746 and 751. Position 759 is a phosphotyrosine (Tyr-759). Positions 863-889 (NKTQGMDSHSSFEQSMSFDTKAVPSAR) are disordered. The span at 864–880 (KTQGMDSHSSFEQSMSF) shows a compositional bias: polar residues.

This sequence belongs to the protein kinase superfamily. Ser/Thr protein kinase family.

It localises to the cell membrane. It carries out the reaction L-seryl-[protein] + ATP = O-phospho-L-seryl-[protein] + ADP + H(+). The catalysed reaction is L-threonyl-[protein] + ATP = O-phospho-L-threonyl-[protein] + ADP + H(+). This is Putative receptor-like protein kinase At3g46340 from Arabidopsis thaliana (Mouse-ear cress).